The primary structure comprises 343 residues: Probable potassium channel protein 2 (343 aa).

The Cytoplasmic portion of the chain corresponds to methionine 1–leucine 7. Residues valine 8–isoleucine 28 form a helical membrane-spanning segment. Residues glutamate 29–threonine 61 are Extracellular-facing. The short motif at threonine 46 to aspartate 51 is the Selectivity filter element. A helical membrane pass occupies residues leucine 62–alanine 82. Topologically, residues glutamate 83–leucine 343 are cytoplasmic. The 121-residue stretch at lysine 107–serine 227 folds into the RCK N-terminal domain. Residues isoleucine 253–lysine 338 enclose the RCK C-terminal domain.

It is found in the cell membrane. In terms of biological role, probable potassium channel protein. This chain is Probable potassium channel protein 2, found in Methanocaldococcus jannaschii (strain ATCC 43067 / DSM 2661 / JAL-1 / JCM 10045 / NBRC 100440) (Methanococcus jannaschii).